The following is a 285-amino-acid chain: Bifunctional protein FolD (285 aa).

NADP(+)-binding positions include Gly165–Ser167, Ser190, and Ile231.

Belongs to the tetrahydrofolate dehydrogenase/cyclohydrolase family. In terms of assembly, homodimer.

It catalyses the reaction (6R)-5,10-methylene-5,6,7,8-tetrahydrofolate + NADP(+) = (6R)-5,10-methenyltetrahydrofolate + NADPH. The enzyme catalyses (6R)-5,10-methenyltetrahydrofolate + H2O = (6R)-10-formyltetrahydrofolate + H(+). It participates in one-carbon metabolism; tetrahydrofolate interconversion. Its function is as follows. Catalyzes the oxidation of 5,10-methylenetetrahydrofolate to 5,10-methenyltetrahydrofolate and then the hydrolysis of 5,10-methenyltetrahydrofolate to 10-formyltetrahydrofolate. This chain is Bifunctional protein FolD, found in Magnetococcus marinus (strain ATCC BAA-1437 / JCM 17883 / MC-1).